A 312-amino-acid polypeptide reads, in one-letter code: Beta-ketoacyl-[acyl-carrier-protein] synthase III 1 (312 aa).

Active-site residues include cysteine 113 and histidine 237. Residues 238–242 (QANIR) form an ACP-binding region. Asparagine 267 is an active-site residue.

Belongs to the thiolase-like superfamily. FabH family. In terms of assembly, homodimer.

Its subcellular location is the cytoplasm. The enzyme catalyses malonyl-[ACP] + acetyl-CoA + H(+) = 3-oxobutanoyl-[ACP] + CO2 + CoA. The protein operates within lipid metabolism; fatty acid biosynthesis. In terms of biological role, catalyzes the condensation reaction of fatty acid synthesis by the addition to an acyl acceptor of two carbons from malonyl-ACP. Catalyzes the first condensation reaction which initiates fatty acid synthesis and may therefore play a role in governing the total rate of fatty acid production. Possesses both acetoacetyl-ACP synthase and acetyl transacylase activities. Its substrate specificity determines the biosynthesis of branched-chain and/or straight-chain of fatty acids. The protein is Beta-ketoacyl-[acyl-carrier-protein] synthase III 1 of Halalkalibacterium halodurans (strain ATCC BAA-125 / DSM 18197 / FERM 7344 / JCM 9153 / C-125) (Bacillus halodurans).